The following is a 321-amino-acid chain: MTYKQRNTNQLAIDLITLSRFNRYNPLLATFSGVWATILAGSHKITHSPNSVTSEYVLSQALLCFICSFVFCGAGMVWNDWIDLHIDRQVARTKGRPLARGAVTTSEALVWMAFQFISSWVLVSWMLEGENVQAAMLPVTLSTILYPFAKRPIFRRLHIYPQYLLGFTLAYPSLIGTLAIKPEGNAQPLWASINQSLPMFVTVFTWTLYLNTAYSYQDVVDDQKMNVNSAYVLAGSYIHHLLVVLAVLVLGAVGWQLYGQESQWLWGGWMGVWTWSFLGQLVRFDKSRPESGGPLHKENFALGVWTVFVCVVELLIGGNGC.

9 helical membrane-spanning segments follow: residues 26–46 (PLLA…HKIT), 57–77 (VLSQ…AGMV), 107–127 (EALV…SWML), 132–149 (VQAA…YPFA), 159–179 (IYPQ…GTLA), 189–209 (LWAS…WTLY), 232–252 (VLAG…VLGA), 262–282 (SQWL…GQLV), and 300–320 (FALG…GGNG).

The protein belongs to the UbiA prenyltransferase family. Requires Mg(2+) as cofactor.

It is found in the membrane. The protein operates within secondary metabolite biosynthesis; terpenoid biosynthesis. Functionally, polyprenyl transferase; part of the cluster A that mediates the biosynthesis of chevalone E and its oxidized derivatives that possess a unique five-membered lactone ring and can synergistically enhance the cytotoxicity of doxorubicin (DOX) in breast cancer cells. Within the pathway, cle5 takes part to the biosynthesis of the molecular scaffold by catalyzing the C-3 geranylgeranylation reaction of triacetic acid lactone (TAL) produced by cle1. The molecular scaffold is commonly biosynthesized by a series of enzymes including the non-reducing polyketide synthase (NR-PKS) cle1 that produces the alpha-pyrone triacetic acid lactone (TAL); The membrane-bound prenyltransferase cle5 that accepts TAL as its substrate to perform a C-3 geranylgeranylation reaction, in which the pathway-dedicated GGPS cle6 is required to provide GGPP, the other substrate of cle5; the FAD-dependent monooxygenase Cle3 that forms an (S)-epoxide ring at the terminal olefin of the geranylgeranyl group; and the terpene cyclase Cle7 that catalyzes the cyclization of the prenyl group that yields the pentacyclic pathway intermediate chevalone E. Chevalone E can derivatize into seven new oxidized analogs by the cytochrome P450 monooxygenases cle2 (acting at C-20) and cle4 (acting at C-11 and C-12). The protein is Polyprenyl transferase cle5 of Aspergillus versicolor.